Consider the following 104-residue polypeptide: Snakin-2 (104 aa).

Residues 1–23 (MAISKALFASLLLSLLLLEQVQS) form the signal peptide. A propeptide spans 24–38 (IQTDQVTSNAISEAA) (removed in mature form).

Belongs to the GASA family. Six disulfide bonds may be present. Expressed in tubers, stems, flowers, shoot apex and leaves, but not in roots or stolons.

Its subcellular location is the secreted. The protein resides in the cell wall. Functionally, has an antimicrobial activity. Causes a rapid aggregation of both Gram-positive and Gram-negative bacteria, but the antimicrobial activity is not correlated with the capacity to aggregate bacteria. This is Snakin-2 (SN2) from Solanum tuberosum (Potato).